A 180-amino-acid polypeptide reads, in one-letter code: Large ribosomal subunit protein uL5 (180 aa).

It belongs to the universal ribosomal protein uL5 family. Part of the 50S ribosomal subunit; part of the 5S rRNA/L5/L18/L25 subcomplex. Contacts the 5S rRNA and the P site tRNA. Forms a bridge to the 30S subunit in the 70S ribosome.

In terms of biological role, this is one of the proteins that bind and probably mediate the attachment of the 5S RNA into the large ribosomal subunit, where it forms part of the central protuberance. In the 70S ribosome it contacts protein S13 of the 30S subunit (bridge B1b), connecting the 2 subunits; this bridge is implicated in subunit movement. Contacts the P site tRNA; the 5S rRNA and some of its associated proteins might help stabilize positioning of ribosome-bound tRNAs. The protein is Large ribosomal subunit protein uL5 of Rippkaea orientalis (strain PCC 8801 / RF-1) (Cyanothece sp. (strain PCC 8801)).